We begin with the raw amino-acid sequence, 234 residues long: Large ribosomal subunit protein uL1 (234 aa).

It belongs to the universal ribosomal protein uL1 family. As to quaternary structure, part of the 50S ribosomal subunit.

Functionally, binds directly to 23S rRNA. The L1 stalk is quite mobile in the ribosome, and is involved in E site tRNA release. Protein L1 is also a translational repressor protein, it controls the translation of the L11 operon by binding to its mRNA. The protein is Large ribosomal subunit protein uL1 of Prochlorococcus marinus (strain MIT 9211).